The chain runs to 77 residues: MSDVAKRVKEIIAEQLGVDEAQAVSEASFMDDLGADSLDTVELVMALEEEFDIEIPDEDAEKIQTVQDAIDYITEHT.

In terms of domain architecture, Carrier spans 2–77 (SDVAKRVKEI…DAIDYITEHT (76 aa)). An O-(pantetheine 4'-phosphoryl)serine modification is found at serine 37.

This sequence belongs to the acyl carrier protein (ACP) family. 4'-phosphopantetheine is transferred from CoA to a specific serine of apo-ACP by AcpS. This modification is essential for activity because fatty acids are bound in thioester linkage to the sulfhydryl of the prosthetic group.

The protein resides in the cytoplasm. It functions in the pathway lipid metabolism; fatty acid biosynthesis. Carrier of the growing fatty acid chain in fatty acid biosynthesis. This is Acyl carrier protein from Trichlorobacter lovleyi (strain ATCC BAA-1151 / DSM 17278 / SZ) (Geobacter lovleyi).